Consider the following 398-residue polypeptide: Carbamoyl phosphate synthase small chain (398 aa).

A CPSase region spans residues 1–204 (MSPLLPSFPP…PAYGTLDTGK (204 aa)). L-glutamine-binding residues include serine 53, glycine 256, and glycine 258. Positions 208–395 (KVVAYDFGVK…VELMNAASKK (188 aa)) constitute a Glutamine amidotransferase type-1 domain. The active-site Nucleophile is cysteine 284. Positions 285, 288, 326, 328, and 329 each coordinate L-glutamine. Residues histidine 368 and glutamate 370 contribute to the active site.

Belongs to the CarA family. Composed of two chains; the small (or glutamine) chain promotes the hydrolysis of glutamine to ammonia, which is used by the large (or ammonia) chain to synthesize carbamoyl phosphate. Tetramer of heterodimers (alpha,beta)4.

It carries out the reaction hydrogencarbonate + L-glutamine + 2 ATP + H2O = carbamoyl phosphate + L-glutamate + 2 ADP + phosphate + 2 H(+). The enzyme catalyses L-glutamine + H2O = L-glutamate + NH4(+). It participates in amino-acid biosynthesis; L-arginine biosynthesis; carbamoyl phosphate from bicarbonate: step 1/1. The protein operates within pyrimidine metabolism; UMP biosynthesis via de novo pathway; (S)-dihydroorotate from bicarbonate: step 1/3. Its function is as follows. Small subunit of the glutamine-dependent carbamoyl phosphate synthetase (CPSase). CPSase catalyzes the formation of carbamoyl phosphate from the ammonia moiety of glutamine, carbonate, and phosphate donated by ATP, constituting the first step of 2 biosynthetic pathways, one leading to arginine and/or urea and the other to pyrimidine nucleotides. The small subunit (glutamine amidotransferase) binds and cleaves glutamine to supply the large subunit with the substrate ammonia. The polypeptide is Carbamoyl phosphate synthase small chain (Polynucleobacter necessarius subsp. necessarius (strain STIR1)).